The primary structure comprises 210 residues: Probable GTP-binding protein EngB (210 aa).

Residues 25 to 199 (TGIEVAFAGR…RQKLDTWFNE (175 aa)) enclose the EngB-type G domain. Residues 33–40 (GRSNAGKS), 60–64 (GRTQL), 78–81 (DLPG), 145–148 (TKAD), and 178–180 (FSS) contribute to the GTP site. Mg(2+) contacts are provided by S40 and T62.

This sequence belongs to the TRAFAC class TrmE-Era-EngA-EngB-Septin-like GTPase superfamily. EngB GTPase family. Mg(2+) is required as a cofactor.

Necessary for normal cell division and for the maintenance of normal septation. In Escherichia coli O157:H7, this protein is Probable GTP-binding protein EngB.